We begin with the raw amino-acid sequence, 362 residues long: Biotin synthase (362 aa).

The disordered stretch occupies residues 14 to 39 (AQRTPEPLPPTSQGLARPSHDVVRGP). The Radical SAM core domain occupies 87–316 (HKGGPAALCG…ARDILVCGGR (230 aa)). [4Fe-4S] cluster contacts are provided by C105, C109, and C112. Residues C181 and C241 each contribute to the [2Fe-2S] cluster site.

Belongs to the radical SAM superfamily. Biotin synthase family. Homodimer. [4Fe-4S] cluster serves as cofactor. The cofactor is [2Fe-2S] cluster.

It catalyses the reaction (4R,5S)-dethiobiotin + (sulfur carrier)-SH + 2 reduced [2Fe-2S]-[ferredoxin] + 2 S-adenosyl-L-methionine = (sulfur carrier)-H + biotin + 2 5'-deoxyadenosine + 2 L-methionine + 2 oxidized [2Fe-2S]-[ferredoxin]. It participates in cofactor biosynthesis; biotin biosynthesis; biotin from 7,8-diaminononanoate: step 2/2. Catalyzes the conversion of dethiobiotin (DTB) to biotin by the insertion of a sulfur atom into dethiobiotin via a radical-based mechanism. The sequence is that of Biotin synthase from Nitratidesulfovibrio vulgaris (strain ATCC 29579 / DSM 644 / CCUG 34227 / NCIMB 8303 / VKM B-1760 / Hildenborough) (Desulfovibrio vulgaris).